Reading from the N-terminus, the 261-residue chain is Carbonic anhydrase 1 (261 aa).

Alanine 2 is subject to N-acetylalanine. Residues 4–261 (PDWGYDGENG…LNGRTVKASF (258 aa)) enclose the Alpha-carbonic anhydrase domain. The active-site Proton donor/acceptor is histidine 65. The Zn(2+) site is built by histidine 95, histidine 97, and histidine 120. Substrate-binding positions include threonine 200 and 200-201 (TH).

This sequence belongs to the alpha-carbonic anhydrase family. Zn(2+) is required as a cofactor.

The protein localises to the cytoplasm. It catalyses the reaction hydrogencarbonate + H(+) = CO2 + H2O. The enzyme catalyses urea = cyanamide + H2O. Inhibited by acetazolamide. Functionally, catalyzes the reversible hydration of carbon dioxide. Can hydrate cyanamide to urea. This chain is Carbonic anhydrase 1 (CA1), found in Bos taurus (Bovine).